A 203-amino-acid polypeptide reads, in one-letter code: ATP-dependent Clp protease proteolytic subunit 2 (203 aa).

Ser97 (nucleophile) is an active-site residue. His122 is an active-site residue.

The protein belongs to the peptidase S14 family. In terms of assembly, fourteen ClpP subunits assemble into 2 heptameric rings which stack back to back to give a disk-like structure with a central cavity, resembling the structure of eukaryotic proteasomes.

It is found in the cytoplasm. It carries out the reaction Hydrolysis of proteins to small peptides in the presence of ATP and magnesium. alpha-casein is the usual test substrate. In the absence of ATP, only oligopeptides shorter than five residues are hydrolyzed (such as succinyl-Leu-Tyr-|-NHMec, and Leu-Tyr-Leu-|-Tyr-Trp, in which cleavage of the -Tyr-|-Leu- and -Tyr-|-Trp bonds also occurs).. Its function is as follows. Cleaves peptides in various proteins in a process that requires ATP hydrolysis. Has a chymotrypsin-like activity. Plays a major role in the degradation of misfolded proteins. In Myxococcus xanthus (strain DK1622), this protein is ATP-dependent Clp protease proteolytic subunit 2.